A 180-amino-acid polypeptide reads, in one-letter code: Probable RNA 2'-phosphotransferase (180 aa).

This sequence belongs to the KptA/TPT1 family.

Its function is as follows. Removes the 2'-phosphate from RNA via an intermediate in which the phosphate is ADP-ribosylated by NAD followed by a presumed transesterification to release the RNA and generate ADP-ribose 1''-2''-cyclic phosphate (APPR&gt;P). May function as an ADP-ribosylase. The chain is Probable RNA 2'-phosphotransferase from Pectobacterium atrosepticum (strain SCRI 1043 / ATCC BAA-672) (Erwinia carotovora subsp. atroseptica).